A 182-amino-acid polypeptide reads, in one-letter code: UPF0200 protein Mboo_1593 (182 aa).

8–15 (GLPASGKG) contributes to the ATP binding site.

Belongs to the UPF0200 family.

The chain is UPF0200 protein Mboo_1593 from Methanoregula boonei (strain DSM 21154 / JCM 14090 / 6A8).